The primary structure comprises 307 residues: Cysteine synthase (307 aa).

Lys42 carries the N6-(pyridoxal phosphate)lysine modification. Residues Asn72, 176–180, and Ser263 each bind pyridoxal 5'-phosphate; that span reads GTGGH.

This sequence belongs to the cysteine synthase/cystathionine beta-synthase family. It depends on pyridoxal 5'-phosphate as a cofactor.

The catalysed reaction is O-acetyl-L-serine + hydrogen sulfide = L-cysteine + acetate. It functions in the pathway amino-acid biosynthesis; L-cysteine biosynthesis; L-cysteine from L-serine: step 2/2. The chain is Cysteine synthase (cysK) from Flavobacterium sp. (strain K3-15 / DSM ID92-509).